The chain runs to 315 residues: DNA-directed RNA polymerase subunit alpha (315 aa).

The alpha N-terminal domain (alpha-NTD) stretch occupies residues 1-227 (MTQFQIECVE…NLFNPFKKIN (227 aa)). The interval 239 to 315 (EDKISQIPIE…PKRKTNKKEN (77 aa)) is alpha C-terminal domain (alpha-CTD).

It belongs to the RNA polymerase alpha chain family. In plastids the minimal PEP RNA polymerase catalytic core is composed of four subunits: alpha, beta, beta', and beta''. When a (nuclear-encoded) sigma factor is associated with the core the holoenzyme is formed, which can initiate transcription.

The protein resides in the plastid. Its subcellular location is the cyanelle. It carries out the reaction RNA(n) + a ribonucleoside 5'-triphosphate = RNA(n+1) + diphosphate. Functionally, DNA-dependent RNA polymerase catalyzes the transcription of DNA into RNA using the four ribonucleoside triphosphates as substrates. This chain is DNA-directed RNA polymerase subunit alpha, found in Cyanophora paradoxa.